The sequence spans 48 residues: Large ribosomal subunit protein bL33B (48 aa).

Belongs to the bacterial ribosomal protein bL33 family.

This Lactococcus lactis subsp. cremoris (strain MG1363) protein is Large ribosomal subunit protein bL33B.